A 227-amino-acid polypeptide reads, in one-letter code: Gamma-glutamyl-hercynylcysteine sulfoxide hydrolase (227 aa).

Catalysis depends on Cys-2, which acts as the Nucleophile. The Glutamine amidotransferase type-2 domain occupies 2–227; sequence CRHVAWLGAP…RDAHVVVTPL (226 aa).

It catalyses the reaction gamma-L-glutamyl-hercynylcysteine S-oxide + H2O = S-(hercyn-2-yl)-L-cysteine S-oxide + L-glutamate. It functions in the pathway amino-acid biosynthesis; ergothioneine biosynthesis. Catalyzes the hydrolysis of the gamma-glutamyl amide bond of hercynyl-gamma-L-glutamyl-L-cysteine sulfoxide to produce hercynylcysteine sulfoxide, a step in the biosynthesis pathway of ergothioneine. This is Gamma-glutamyl-hercynylcysteine sulfoxide hydrolase from Mycolicibacterium smegmatis (strain ATCC 700084 / mc(2)155) (Mycobacterium smegmatis).